Here is a 285-residue protein sequence, read N- to C-terminus: Protease HtpX homolog (285 aa).

2 consecutive transmembrane segments (helical) span residues 7-27 (TAML…MIGG) and 30-50 (GMTI…WFSD). His-131 is a Zn(2+) binding site. Glu-132 is an active-site residue. His-135 serves as a coordination point for Zn(2+). Transmembrane regions (helical) follow at residues 146-166 (ITAT…FFGG) and 177-197 (IAGI…QMAI). A Zn(2+)-binding site is contributed by Glu-202.

It belongs to the peptidase M48B family. The cofactor is Zn(2+).

It is found in the cell inner membrane. This Burkholderia cenocepacia (strain HI2424) protein is Protease HtpX homolog.